Reading from the N-terminus, the 327-residue chain is Cobalamin biosynthesis protein CobD (327 aa).

A run of 4 helical transmembrane segments spans residues 63-83 (VGIL…ARLF), 84-104 (DVLG…FLAQ), 158-178 (FSDG…PGLL), and 305-325 (VFYA…LPLL).

The protein belongs to the CobD/CbiB family.

The protein localises to the cell membrane. The protein operates within cofactor biosynthesis; adenosylcobalamin biosynthesis. In terms of biological role, converts cobyric acid to cobinamide by the addition of aminopropanol on the F carboxylic group. The chain is Cobalamin biosynthesis protein CobD from Rhizobium meliloti (strain 1021) (Ensifer meliloti).